A 474-amino-acid chain; its full sequence is Shufflon protein A (474 aa).

The constant region stretch occupies residues 1 to 361; sequence MKKYDRGWAS…TGAILSCQSG (361 aa). The variable region stretch occupies residues 362–474; sequence TWKTSGSLNG…GVFSVFGYQT (113 aa).

In Escherichia coli, this protein is Shufflon protein A.